The following is a 686-amino-acid chain: MAM domain-containing protein 2 (686 aa).

A signal peptide spans 1–18; that stretch reads MLLEGVLLVVQALQLASA. 4 consecutive MAM domains span residues 24–169, 168–329, 340–498, and 507–666; these read GSCA…YCIE, IECD…HCQN, TSCD…NCRS, and GECT…PCAG. Asparagine 134 and asparagine 329 each carry an N-linked (GlcNAc...) asparagine glycan. The N-linked (GlcNAc...) asparagine glycan is linked to asparagine 524. Positions 665 to 686 are disordered; that stretch reads AGMEDTTEQSSGYSEDLNEIEY.

O-glycosylated; contains chondroitin sulfate.

It localises to the secreted. The protein resides in the extracellular space. It is found in the extracellular matrix. In Mus musculus (Mouse), this protein is MAM domain-containing protein 2 (Mamdc2).